A 577-amino-acid polypeptide reads, in one-letter code: ATP-dependent zinc metalloprotease FtsH (577 aa).

Over 1–3 (MKK) the chain is Cytoplasmic. A helical transmembrane segment spans residues 4 to 24 (LYWIILIAVVLACSGILMSLH). The Extracellular segment spans residues 25-98 (LSVTKEEMTY…IKVDNSDSYS (74 aa)). Residues 99 to 119 (ATKVIQIILIITVGTGVFLFI) traverse the membrane as a helical segment. At 120-577 (RTSGGKDKPL…IDRICLKEAV (458 aa)) the chain is on the cytoplasmic side. 186-193 (GPPGTGKT) is an ATP binding site. Histidine 409 contacts Zn(2+). Glutamate 410 is a catalytic residue. Zn(2+) contacts are provided by histidine 413 and aspartate 487.

It in the central section; belongs to the AAA ATPase family. In the C-terminal section; belongs to the peptidase M41 family. In terms of assembly, homohexamer. Requires Zn(2+) as cofactor.

It is found in the cell membrane. Functionally, acts as a processive, ATP-dependent zinc metallopeptidase for both cytoplasmic and membrane proteins. Plays a role in the quality control of integral membrane proteins. This is ATP-dependent zinc metalloprotease FtsH from Lachnoclostridium phytofermentans (strain ATCC 700394 / DSM 18823 / ISDg) (Clostridium phytofermentans).